A 505-amino-acid polypeptide reads, in one-letter code: RNA-splicing ligase RtcB homolog (505 aa).

Mn(2+) contacts are provided by Asp119, Cys122, His227, His259, and His353. 226 to 230 (NHYAE) is a binding site for GMP. GMP is bound by residues 353 to 354 (HN), 402 to 405 (GGTM), Ser409, 428 to 431 (HGAG), and Lys504. The active-site GMP-histidine intermediate is His428.

This sequence belongs to the RtcB family. In terms of assembly, catalytic component of the tRNA-splicing ligase complex. Mn(2+) serves as cofactor.

Its subcellular location is the nucleus. The protein localises to the cytoplasm. It catalyses the reaction a 3'-end 3'-phospho-ribonucleotide-RNA + a 5'-end dephospho-ribonucleoside-RNA + GTP = a ribonucleotidyl-ribonucleotide-RNA + GMP + diphosphate. It carries out the reaction a 3'-end 2',3'-cyclophospho-ribonucleotide-RNA + a 5'-end dephospho-ribonucleoside-RNA + GTP + H2O = a ribonucleotidyl-ribonucleotide-RNA + GMP + diphosphate + H(+). Catalytic subunit of the tRNA-splicing ligase complex that acts by directly joining spliced tRNA halves to mature-sized tRNAs by incorporating the precursor-derived splice junction phosphate into the mature tRNA as a canonical 3',5'-phosphodiester. May act as an RNA ligase with broad substrate specificity, and may function toward other RNAs. This is RNA-splicing ligase RtcB homolog from Xenopus tropicalis (Western clawed frog).